We begin with the raw amino-acid sequence, 206 residues long: Accelerated cell death 11 (206 aa).

Residues Asp60, Lys64, Arg99, Arg103, and His143 each contribute to the an N-acylsphingoid base 1-phosphate site.

Belongs to the GLTP family. Interacts with BPA1, PRA1F2 and PRA1F3.

It localises to the cytoplasm. Exhibits selective intermembrane transfer of ceramide-1-phosphate (C1P) and phytoceramide-1-phosphate. Does not transport ceramide (Cer) or GalCer, suggesting a requirement for phosphate in the headgroup for functionality. Transports in vitro sphingosine, but not glycosphingolipids. Also has some in vitro activity with sphingomyelin, a lipid not detected in plant tissues. The transport function may be not directly involved in regulating cell death. Rather, perturbations in the function of ACD11 or related components could be monitored by R-proteins, which then mediate defense and programmed cell death (PCD), as proposed in the guard hypothesis. C1P transfer is stimulated by phosphatidylserine in C1P source vesicles. Regulates autophagy, inflammasome mediated IL1B and IL18 processing, and pyroptosis, but not apoptosis. The polypeptide is Accelerated cell death 11 (Arabidopsis thaliana (Mouse-ear cress)).